The chain runs to 362 residues: Myricetin 3'/5'-O-methyltransferase 1 (362 aa).

Asp-229 contributes to the S-adenosyl-L-methionine binding site. Catalysis depends on His-267, which acts as the Proton acceptor.

This sequence belongs to the class I-like SAM-binding methyltransferase superfamily. Cation-independent O-methyltransferase family. In terms of assembly, homodimer. As to expression, mainly expressed in leaves secreting glandular trichomes types 1 and 4 and, to a lesser extent, in storage trichomes type 6.

The enzyme catalyses myricetin + S-adenosyl-L-methionine = laricitrin + S-adenosyl-L-homocysteine + H(+). It catalyses the reaction laricitrin + S-adenosyl-L-methionine = syringetin + S-adenosyl-L-homocysteine + H(+). The catalysed reaction is a 3'-hydroxyflavone + S-adenosyl-L-methionine = a 3'-methoxyflavone + S-adenosyl-L-homocysteine + H(+). It carries out the reaction a 5'-hydroxy-3'-methoxyflavone + S-adenosyl-L-methionine = a 3',5'-dimethoxyflavone + S-adenosyl-L-homocysteine + H(+). The enzyme catalyses quercetin + S-adenosyl-L-methionine = isorhamnetin + S-adenosyl-L-homocysteine + H(+). It catalyses the reaction rhamnetin + S-adenosyl-L-methionine = rhamnacene + S-adenosyl-L-homocysteine + H(+). The catalysed reaction is 3',4',5,7-tetrahydroxy-3-methoxyflavone + S-adenosyl-L-methionine = 3,3'-O-dimethylquercetin + S-adenosyl-L-homocysteine + H(+). It functions in the pathway flavonoid metabolism. In terms of biological role, flavonoid 3'/5'-O-methyltransferase involved in the biosynthesis of polymethoxylated flavonoids natural products such as myricetin derivatives, aroma compounds possessing antioxidant properties and exhibiting pharmacological activities such as anti-carcinogen, anti-viral, anti-thrombotic, anti-diabetic, anti-atherosclerotic, and anti-inflammatory effects. Catalyzes S-adenosylmethionine-dependent regioselective 3'/5'-O-methylation of flavonoids; active on various hydroxylated flavonoid substrates, including myricetin and quercetin, but inactive toward kaempferol. Mediates the formation of 3'-methyl derivatives from quercetin, myricetin, 3-methyl quercetin and 7-methyl quercetin (rhamnetin), producing 3'-methyl quercetin (isorhamnetin), 3'-methyl myricetin (laricitrin), 3,3'-dimethyl quercetin (3-O-methylisorhamnetin) and 7,3'-dimethyl quercetin (7-O-methylisorhamnetin), respectively. Triggers the 5'-O-methylation of 3'-methyl myricetin (laricitrin), thus leading to production of 3',5'-dimethyl myricetin (syringetin). This chain is Myricetin 3'/5'-O-methyltransferase 1, found in Solanum habrochaites (Wild tomato).